The sequence spans 554 residues: Guanine nucleotide-binding protein alpha-2 subunit (554 aa).

Disordered regions lie at residues 1–139 (MGLC…NNSN) and 157–183 (VNGN…THSG). Gly2 carries N-myristoyl glycine lipidation. The S-palmitoyl cysteine moiety is linked to residue Cys4. 2 stretches are compositionally biased toward basic and acidic residues: residues 7–17 (KDSRESTHDGG) and 28–43 (ANRR…DKKQ). The segment covering 52–66 (GSIVNAASNINNSSS) has biased composition (low complexity). Polar residues predominate over residues 67–85 (GKTKISTVSEDGTVSNGVG). A compositionally biased stretch (low complexity) spans 91-139 (DNANNKNNGNNNNSNNNDNNNNNNNNIGNNINGNNNNDSENIHDSNNSN). Residues 228–554 (NALKVLLLGS…ENSLKDSGVL (327 aa)) form the G-alpha domain. Residues 231-244 (KVLLLGSGESGKST) form a G1 motif region. Residues Glu239, Ser240, Gly241, Lys242, Ser243, Thr244, Asp351, Ile376, Thr382, Gly405, Asn471, Lys472, Asp474, and Ala526 each contribute to the GTP site. A Mg(2+)-binding site is contributed by Ser243. Residues 374–382 (DVIRTRKKT) are G2 motif. Position 382 (Thr382) interacts with Mg(2+). The tract at residues 398–407 (LHFFDVGGQR) is G3 motif. A G4 motif region spans residues 467–474 (VLFLNKID). A G5 motif region spans residues 524–529 (TQATDT).

The protein belongs to the G-alpha family. G proteins are composed of 3 units; alpha, beta and gamma. The alpha chain contains the guanine nucleotide binding site. The cofactor is Mg(2+).

Its function is as follows. Guanine nucleotide-binding proteins (G proteins) are involved as modulators or transducers in various transmembrane signaling systems. This protein may be involved in the determination of the cAMP level according to nutritional conditions, most probably as a regulator of adenylyl cyclase. The protein is Guanine nucleotide-binding protein alpha-2 subunit (GPA2) of Kluyveromyces lactis (strain ATCC 8585 / CBS 2359 / DSM 70799 / NBRC 1267 / NRRL Y-1140 / WM37) (Yeast).